Consider the following 257-residue polypeptide: E3 ubiquitin-protein ligase RNF170 (257 aa).

At 1–24 the chain is on the lumenal side; it reads MADNQEGRPYFPLDEGSIIEGVSD. The helical transmembrane segment at 25–45 threads the bilayer; that stretch reads QVIVVVLLSFVAVGSLLYLLL. At 46–200 the chain is on the cytoplasmic side; the sequence is RNDEQNIHPE…GGLFWMFRIR (155 aa). The RING-type zinc-finger motif lies at 87–130; the sequence is CPVCLQQATFPVETNCGHLFCGSCIIAYWRYGSWLGAINCPICR. A helical transmembrane segment spans residues 201–221; that stretch reads IVLCLLGALFYLVSPLDIIPE. A topological domain (lumenal) is located at residue Ala-222. The chain crosses the membrane as a helical span at residues 223–243; sequence VFGLLGFLDDFFVLFLLLIYI. Residues 244-257 lie on the Cytoplasmic side of the membrane; sequence SIMYREVVTQRLYR.

Its subcellular location is the endoplasmic reticulum membrane. It carries out the reaction S-ubiquitinyl-[E2 ubiquitin-conjugating enzyme]-L-cysteine + [acceptor protein]-L-lysine = [E2 ubiquitin-conjugating enzyme]-L-cysteine + N(6)-ubiquitinyl-[acceptor protein]-L-lysine.. It functions in the pathway protein modification; protein ubiquitination. Functionally, E3 ubiquitin-protein ligase that plays an essential role in stimulus-induced inositol 1,4,5-trisphosphate receptor (ITPR) ubiquitination and degradation via the endoplasmic reticulum-associated degradation (ERAD) pathway. Also involved in ITPR turnover in resting cells. The protein is E3 ubiquitin-protein ligase RNF170 (rnf170) of Xenopus tropicalis (Western clawed frog).